A 159-amino-acid polypeptide reads, in one-letter code: Ribosomal RNA large subunit methyltransferase H (159 aa).

Residues Leu-76, Gly-108, and 127 to 132 (FGLLTL) each bind S-adenosyl-L-methionine.

Belongs to the RNA methyltransferase RlmH family. Homodimer.

It localises to the cytoplasm. It carries out the reaction pseudouridine(1915) in 23S rRNA + S-adenosyl-L-methionine = N(3)-methylpseudouridine(1915) in 23S rRNA + S-adenosyl-L-homocysteine + H(+). Functionally, specifically methylates the pseudouridine at position 1915 (m3Psi1915) in 23S rRNA. The polypeptide is Ribosomal RNA large subunit methyltransferase H (Streptococcus pyogenes serotype M3 (strain SSI-1)).